Here is a 231-residue protein sequence, read N- to C-terminus: Albumin-2 (231 aa).

Hemopexin repeat units follow at residues 4-55 (TGYI…FKSL), 62-112 (SYGV…FPFF), 118-166 (ENGI…FPCF), and 172-223 (ESGT…WPSL). Asparagine 8, aspartate 66, aspartate 122, and aspartate 176 together coordinate Ca(2+).

Monomer and homodimer.

It is found in the cytoplasm. The protein resides in the cytosol. Its function is as follows. May play a role in response to oxidative stress and polyamine biosynthesis. This chain is Albumin-2, found in Pisum sativum (Garden pea).